We begin with the raw amino-acid sequence, 403 residues long: 26S proteasome regulatory subunit 8 homolog (403 aa).

An ATP-binding site is contributed by 186–193; the sequence is GPPGTGKT.

This sequence belongs to the AAA ATPase family.

The protein localises to the cytoplasm. Its subcellular location is the nucleus. The 26S proteasome is involved in the ATP-dependent degradation of ubiquitinated proteins. The regulatory (or ATPase) complex confers ATP dependency and substrate specificity to the 26S complex. This Schizosaccharomyces pombe (strain 972 / ATCC 24843) (Fission yeast) protein is 26S proteasome regulatory subunit 8 homolog (let1).